A 1186-amino-acid polypeptide reads, in one-letter code: Pumilio homolog 1 (1186 aa).

Residue serine 2 is modified to N-acetylserine. Position 19 is a phosphoserine (serine 19). The disordered stretch occupies residues 22–73 (LKHHPQEPANPNMPVVLTSGTGSQAQPQPAANQALAAGTHSSPVPGSIGVAG). Residues 45 to 58 (QAQPQPAANQALAA) show a composition bias toward low complexity. Phosphoserine is present on residues serine 75, serine 98, and serine 106. Threonine 112 is subject to Phosphothreonine. 5 positions are modified to phosphoserine: serine 124, serine 159, serine 197, serine 209, and serine 229. Positions 233-272 (SCLRKGGFGPRDADSDENDKGEKKNKGTFDGDKLGDLKEE) are disordered. The span at 250-272 (NDKGEKKNKGTFDGDKLGDLKEE) shows a compositional bias: basic and acidic residues. Serine 305 bears the Phosphoserine mark. Positions 485-502 (TNSANQQTTPQAQQGQQQ) are enriched in low complexity. Disordered regions lie at residues 485-524 (TNSANQQTTPQAQQGQQQVLRGGASQRPLTPNQNQQGQQT) and 613-648 (AGTTNGPFRPLGTQQPQPQPQQQPNNNLASSSFYGN). The segment covering 511-524 (RPLTPNQNQQGQQT) has biased composition (polar residues). The residue at position 514 (threonine 514) is a Phosphothreonine. Over residues 626 to 639 (QQPQPQPQQQPNNN) the composition is skewed to low complexity. Serine 709 and serine 714 each carry phosphoserine. The tract at residues 742 to 773 (GPVGMPLPSQGPGHSQTPPPSLSSHGSSSSLN) is disordered. The span at 763–773 (LSSHGSSSSLN) shows a compositional bias: low complexity. The residue at position 796 (arginine 796) is an Omega-N-methylarginine. Serine 806 and serine 822 each carry phosphoserine. A PUM-HD domain is found at 828–1168 (GRSRLLEDFR…HILAKLEKYY (341 aa)). Pumilio repeat units follow at residues 848 to 883 (EIAGHIMEFSQDQHGSRFIQLKLERATPAERQLVFN), 884 to 919 (EILQAAYQLMVDVFGNYVIQKFFEFGSLEQKLALAE), 920 to 955 (RIRGHVLSLALQMYGCRVIQKALEFIPSDQQNEMVR), 956 to 991 (ELDGHVLKCVKDQNGNHVVQKCIECVQPQSLQFIID), 992 to 1027 (AFKGQVFALSTHPYGCRVIQRILEHCLPDQTLPILE), 1028 to 1063 (ELHQHTEQLVQDQYGNYVIQHVLEHGRPEDKSKIVA), 1064 to 1099 (EIRGNVLVLSQHKFASNVVEKCVTHASRTERAVLID), and 1103 to 1142 (TMNDGPHSALYTMMKDQYANYVVQKMIDVAEPGQRKIVMH). The segment at 863–867 (SRFIQ) is adenine-nucleotide binding in RNA target. Positions 899–903 (NYVIQ) are uracil-nucleotide binding in RNA target. Positions 935-939 (CRVIQ) are adenine-nucleotide binding in RNA target. The tract at residues 971–975 (NHVVQ) is non-specific-nucleotide binding in RNA target. The segment at 1007-1011 (CRVIQ) is adenine-nucleotide binding in RNA target. A uracil-nucleotide binding in RNA target region spans residues 1043–1047 (NYVIQ). The interval 1079 to 1083 (SNVVE) is guanine-nucleotide binding in RNA target. The interval 1122-1126 (NYVVQ) is uracil-nucleotide binding in RNA target.

Recruits the CCR4-POP2-NOT deadenylase leading to translational inhibition and mRNA degradation. In case of viral infection, interacts with DHX58. Interacts with TRIM71 (via NHL repeats) in an RNA-dependent manner. In terms of processing, phosphorylation at Ser-714 promotes RNA-binding activity. Following growth factor stimulation phosphorylated at Ser-714, promoting binding to the 3'-UTR of CDKN1B/p27 mRNA. Expressed in brain, heart, kidney, muscle, intestine and stomach. Not expressed in cerebellum, corpus callosum, caudate nucleus, hippocampus, medulla oblongata and putamen. Expressed in all fetal tissues tested.

The protein resides in the cytoplasm. The protein localises to the P-body. It localises to the cytoplasmic granule. Its function is as follows. Sequence-specific RNA-binding protein that acts as a post-transcriptional repressor by binding the 3'-UTR of mRNA targets. Binds to an RNA consensus sequence, the Pumilio Response Element (PRE), 5'-UGUANAUA-3', that is related to the Nanos Response Element (NRE). Mediates post-transcriptional repression of transcripts via different mechanisms: acts via direct recruitment of the CCR4-POP2-NOT deadenylase leading to translational inhibition and mRNA degradation. Also mediates deadenylation-independent repression by promoting accessibility of miRNAs. Following growth factor stimulation, phosphorylated and binds to the 3'-UTR of CDKN1B/p27 mRNA, inducing a local conformational change that exposes miRNA-binding sites, promoting association of miR-221 and miR-222, efficient suppression of CDKN1B/p27 expression, and rapid entry to the cell cycle. Acts as a post-transcriptional repressor of E2F3 mRNAs by binding to its 3'-UTR and facilitating miRNA regulation. Represses a program of genes necessary to maintain genomic stability such as key mitotic, DNA repair and DNA replication factors. Its ability to repress those target mRNAs is regulated by the lncRNA NORAD (non-coding RNA activated by DNA damage) which, due to its high abundance and multitude of PUMILIO binding sites, is able to sequester a significant fraction of PUM1 and PUM2 in the cytoplasm. Involved in neuronal functions by regulating ATXN1 mRNA levels: acts by binding to the 3'-UTR of ATXN1 transcripts, leading to their down-regulation independently of the miRNA machinery. Plays a role in cytoplasmic sensing of viral infection. In testis, acts as a post-transcriptional regulator of spermatogenesis by binding to the 3'-UTR of mRNAs coding for regulators of p53/TP53. Involved in embryonic stem cell renewal by facilitating the exit from the ground state: acts by targeting mRNAs coding for naive pluripotency transcription factors and accelerates their down-regulation at the onset of differentiation. Binds specifically to miRNA MIR199A precursor, with PUM2, regulates miRNA MIR199A expression at a postranscriptional level. In Homo sapiens (Human), this protein is Pumilio homolog 1.